Consider the following 338-residue polypeptide: Heat-inducible transcription repressor HrcA (338 aa).

This sequence belongs to the HrcA family.

Its function is as follows. Negative regulator of class I heat shock genes (grpE-dnaK-dnaJ and groELS operons). Prevents heat-shock induction of these operons. This Bacillus thuringiensis (strain Al Hakam) protein is Heat-inducible transcription repressor HrcA.